Here is a 436-residue protein sequence, read N- to C-terminus: Platelet-activating factor acetylhydrolase (436 aa).

The first 21 residues, 1–21 (MAPPKLHTLFCLSGFLALVHP), serve as a signal peptide directing secretion. N-linked (GlcNAc...) asparagine glycosylation is found at Asn-76 and Asn-200. The Nucleophile role is filled by Ser-271. Asp-294 functions as the Charge relay system in the catalytic mechanism. The N-linked (GlcNAc...) asparagine glycan is linked to Asn-324. Catalysis depends on His-349, which acts as the Charge relay system.

Belongs to the AB hydrolase superfamily. Lipase family. N-glycosylated. In terms of tissue distribution, plasma.

The protein resides in the secreted. It is found in the extracellular space. The catalysed reaction is a 1-O-alkyl-2-acetyl-sn-glycero-3-phosphocholine + H2O = a 1-O-alkyl-sn-glycero-3-phosphocholine + acetate + H(+). It carries out the reaction 1-O-decyl-2-acetyl-sn-glycero-3-phosphocholine + H2O = 1-O-decyl-sn-glycero-3-phosphocholine + acetate + H(+). It catalyses the reaction 1-O-dodecyl-2-acetyl-sn-glycero-3-phosphocholine + H2O = 1-O-dodecyl-sn-glycero-3-phosphocholine + acetate + H(+). The enzyme catalyses 1-O-tetradecyl-2-acetyl-sn-glycero-3-phosphocholine + H2O = 1-O-tetradecyl-sn-glycero-3-phosphocholine + acetate + H(+). The catalysed reaction is 1-O-hexadecyl-2-acetyl-sn-glycero-3-phosphocholine + H2O = 1-O-hexadecyl-sn-glycero-3-phosphocholine + acetate + H(+). It carries out the reaction 1-O-octadecyl-2-acetyl-sn-glycero-3-phosphocholine + H2O = 1-O-octadecyl-sn-glycero-3-phosphocholine + acetate + H(+). It catalyses the reaction 1-hexadecanoyl-2-acetyl-sn-glycero-3-phosphocholine + H2O = 1-hexadecanoyl-sn-glycero-3-phosphocholine + acetate + H(+). The enzyme catalyses 1-hexadecanoyl-2-propionyl-sn-glycero-3-phosphocholine + H2O = propanoate + 1-hexadecanoyl-sn-glycero-3-phosphocholine + H(+). The catalysed reaction is 1-hexadecanoyl-2-butanoyl-sn-glycero-3-phosphocholine + H2O = butanoate + 1-hexadecanoyl-sn-glycero-3-phosphocholine + H(+). It carries out the reaction 1-hexadecanoyl-2-pentanoyl-sn-glycero-3-phosphocholine + H2O = pentanoate + 1-hexadecanoyl-sn-glycero-3-phosphocholine + H(+). It catalyses the reaction 1-hexadecanoyl-2-glutaroyl-sn-glycero-3-phosphocholine + H2O = glutarate + 1-hexadecanoyl-sn-glycero-3-phosphocholine + H(+). The enzyme catalyses 1-hexadecanoyl-2-(5-oxopentanoyl)-sn-glycero-3-phosphocholine + H2O = 5-oxopentanoate + 1-hexadecanoyl-sn-glycero-3-phosphocholine + H(+). The catalysed reaction is 1-hexadecanoyl-2-(9-oxononanoyl)-sn-glycero-3-phosphocholine + H2O = 9-oxononanoate + 1-hexadecanoyl-sn-glycero-3-phosphocholine + H(+). It carries out the reaction 1-hexadecanoyl-2-[9-hydroperoxy-(10E-octadecenoyl)]-sn-glycero-3-phosphocholine + H2O = 9-hydroperoxy-10E-octadecenoate + 1-hexadecanoyl-sn-glycero-3-phosphocholine + H(+). It catalyses the reaction 1-hexadecanoyl-2-(10-hydroperoxy-8E-octadecenoyl)-sn-glycero-3-phosphocholine + H2O = 10-hydroperoxy-(8E)-octadecenoate + 1-hexadecanoyl-sn-glycero-3-phosphocholine + H(+). Functionally, lipoprotein-associated calcium-independent phospholipase A2 involved in phospholipid catabolism during inflammatory and oxidative stress response. At the lipid-aqueous interface, hydrolyzes the ester bond of fatty acyl group attached at sn-2 position of phospholipids (phospholipase A2 activity). Specifically targets phospholipids with a short-chain fatty acyl group at sn-2 position. Can hydrolyze phospholipids with long fatty acyl chains, only if they carry oxidized functional groups. Hydrolyzes and inactivates platelet-activating factor (PAF, 1-O-alkyl-2-acetyl-sn-glycero-3-phosphocholine), a potent pro-inflammatory signaling lipid that acts through PTAFR on various innate immune cells. Hydrolyzes oxidatively truncated phospholipids carrying an aldehyde group at omega position, preventing their accumulation in lipoprotein particles and uncontrolled pro-inflammatory effects. As part of high-density lipoprotein (HDL) particles, can hydrolyze phospholipids having long-chain fatty acyl hydroperoxides at sn-2 position and protect against potential accumulation of these oxylipins in the vascular wall. Catalyzes the release from membrane phospholipids of F2-isoprostanes, lipid biomarkers of cellular oxidative damage. The sequence is that of Platelet-activating factor acetylhydrolase (PLA2G7) from Cavia porcellus (Guinea pig).